Consider the following 953-residue polypeptide: Catenin alpha-2 (953 aa).

Threonine 632 bears the Phosphothreonine mark. A phosphoserine mark is found at serine 640, serine 651, and serine 901. Positions 912 to 927 (EKKPLVKREKPEEFQT) are enriched in basic and acidic residues. A disordered region spans residues 912 to 939 (EKKPLVKREKPEEFQTRVRRGSQKKHIS). Over residues 928–938 (RVRRGSQKKHI) the composition is skewed to basic residues. The residue at position 939 (serine 939) is a Phosphoserine.

Belongs to the vinculin/alpha-catenin family. As to quaternary structure, interacts with CDH1 and CDH2. Interacts with ZNF639; recruits CTNNA2 to the nucleus. Interacts with F-actin. As to expression, expressed in neural tissues, with strongest expression in fetal and adult brain. Expressed in the developing cortical plate and marginal zone of 20-week-old human fetal brain.

The protein resides in the cell membrane. It localises to the cytoplasm. Its subcellular location is the cytoskeleton. It is found in the cell junction. The protein localises to the adherens junction. The protein resides in the cell projection. It localises to the axon. Its subcellular location is the nucleus. Functionally, may function as a linker between cadherin adhesion receptors and the cytoskeleton to regulate cell-cell adhesion and differentiation in the nervous system. Required for proper regulation of cortical neuronal migration and neurite growth. It acts as a negative regulator of Arp2/3 complex activity and Arp2/3-mediated actin polymerization. It thereby suppresses excessive actin branching which would impair neurite growth and stability. Regulates morphological plasticity of synapses and cerebellar and hippocampal lamination during development. Functions in the control of startle modulation. The protein is Catenin alpha-2 (CTNNA2) of Homo sapiens (Human).